A 156-amino-acid polypeptide reads, in one-letter code: WASQVSENRPVCKAIIQGKQFEGLVDTGADVSIIALNQWPKNWPKQKAVTGLVGIGTASEVYQSTEILHCLGPDNQESTVQPMITSIPLNLWGRDLLQQWGAEITMPAPLYSPTSQKIMTKMGYIPGKGLGKNEDGIKVPVEAKINQEREGIGYPF.

The 76-residue stretch at 21–96 (FEGLVDTGAD…IPLNLWGRDL (76 aa)) folds into the Peptidase A2 domain. Residue aspartate 26 is part of the active site. A G-patch domain is found at 111–156 (YSPTSQKIMTKMGYIPGKGLGKNEDGIKVPVEAKINQEREGIGYPF).

It belongs to the peptidase A2 family. HERV class-II K(HML-2) subfamily. Active as a homodimer. Post-translationally, autoproteolytically processed at the N-terminus. Expected C-terminal autoprocessing not detected. The sequence shown is that of the processed Pro protein.

The catalysed reaction is Processing at the authentic HIV-1 PR recognition site and release of the mature p17 matrix and the p24 capsid protein, as a result of the cleavage of the -SQNY-|-PIVQ- cleavage site.. Retroviral proteases have roles in processing of the primary translation products and the maturation of the viral particle. Endogenous Pro proteins may have kept, lost or modified their original function during evolution. This endogenous protein has retained most of the characteristics of retroviral proteases. The protein is Endogenous retrovirus group K member 7 Pro protein (ERVK-7) of Homo sapiens (Human).